Consider the following 311-residue polypeptide: Probable manganese-dependent inorganic pyrophosphatase (311 aa).

Mn(2+) contacts are provided by His9, Asp13, Asp15, Asp77, His99, and Asp151.

The protein belongs to the PPase class C family. The cofactor is Mn(2+).

Its subcellular location is the cytoplasm. The catalysed reaction is diphosphate + H2O = 2 phosphate + H(+). The chain is Probable manganese-dependent inorganic pyrophosphatase from Streptococcus equi subsp. zooepidemicus (strain MGCS10565).